A 166-amino-acid chain; its full sequence is MFRKVFSVALVTCGLLVIVQAAKKVEQCEKRIPDSLKPKLCQIRQYQLLEGADMEKHIDCVMRALGFVHPDGSGNYHALIEPLNAIDKDRKHGFNLETCGGNRDKLPKRKRAYAFYKCMLKSTSADSFKKAFDLKELVNAGKLSATAKYSPQVDTLMAQIDGMICK.

A signal peptide spans 1–21; the sequence is MFRKVFSVALVTCGLLVIVQA.

This sequence belongs to the PBP/GOBP family. In terms of assembly, interacts with host coagulation factor XII (F12) (inactive and activated) (via amino acids 1-77). Interacts with host high molecular weight kininogen (KNG1) (via amino acids 402-532). Female salivary gland (at protein level).

Its subcellular location is the secreted. Its activity is regulated as follows. Zn(2+) modulates binding to host coagulation factor XII (F12) and high molecular weight kininogen (KNG1). Salivary protein with anticoagulant activity that targets the intrinsic blood coagulation pathway in the host. Inhibits activation of the host plasma contact system by preventing the reciprocal activation of host coagulation factor XII (F12) and prekallikrein (KLKB1). Attenuates generation of bradykinin in host plasma. May bind and sequester different mediators involved in the host response, such as serotonin and histamine. In Anopheles stephensi (Indo-Pakistan malaria mosquito), this protein is Short form salivary protein D7R1.